Reading from the N-terminus, the 167-residue chain is Endoribonuclease YbeY (167 aa).

3 residues coordinate Zn(2+): histidine 131, histidine 135, and histidine 141.

It belongs to the endoribonuclease YbeY family. The cofactor is Zn(2+).

Its subcellular location is the cytoplasm. Functionally, single strand-specific metallo-endoribonuclease involved in late-stage 70S ribosome quality control and in maturation of the 3' terminus of the 16S rRNA. This is Endoribonuclease YbeY from Rickettsia prowazekii (strain Madrid E).